Here is a 222-residue protein sequence, read N- to C-terminus: Triosephosphate isomerase (222 aa).

A substrate-binding site is contributed by 9–11; it reads NYK. His93 functions as the Electrophile in the catalytic mechanism. The Proton acceptor role is filled by Glu141. Substrate-binding positions include Ile146, Gly181, and 202–203; that span reads AS.

This sequence belongs to the triosephosphate isomerase family. Homotetramer; dimer of dimers.

It is found in the cytoplasm. The enzyme catalyses D-glyceraldehyde 3-phosphate = dihydroxyacetone phosphate. It participates in carbohydrate biosynthesis; gluconeogenesis. Its pathway is carbohydrate degradation; glycolysis; D-glyceraldehyde 3-phosphate from glycerone phosphate: step 1/1. In terms of biological role, involved in the gluconeogenesis. Catalyzes stereospecifically the conversion of dihydroxyacetone phosphate (DHAP) to D-glyceraldehyde-3-phosphate (G3P). The chain is Triosephosphate isomerase from Methanobrevibacter smithii (strain ATCC 35061 / DSM 861 / OCM 144 / PS).